A 599-amino-acid polypeptide reads, in one-letter code: Microtubule-associated protein 70-2 (599 aa).

Positions 1 to 30 (MADGGGGEEGSASALRGSARRRGAVQPAGL) are disordered. The stretch at 43 to 349 (DPVKVELNRL…ARSEAQLKEK (307 aa)) forms a coiled coil. The segment at 227–460 (ILDRLHRQKV…HLLNRSTDAV (234 aa)) is required for targeting to microtubules. 2 disordered regions span residues 357 to 453 (LEDG…PHLL) and 557 to 599 (AMRL…RNLQ). Low complexity predominate over residues 404 to 420 (RRSPSFNSRSSLSTSSS). Residues 533-570 (LTKAMEVEAKKMRREVAAMEKEVAAMRLDKDQENKAKR) are a coiled coil. A compositionally biased stretch (basic and acidic residues) spans 557-568 (AMRLDKDQENKA).

The protein belongs to the MAP70 family.

It is found in the cytoplasm. The protein localises to the cytoskeleton. In terms of biological role, plant-specific protein that interact with microtubules. The polypeptide is Microtubule-associated protein 70-2 (MAP70.2) (Oryza sativa subsp. japonica (Rice)).